Reading from the N-terminus, the 444-residue chain is ATP-dependent protease ATPase subunit HslU (444 aa).

ATP contacts are provided by residues isoleucine 18, 60–65, aspartate 257, glutamate 322, and arginine 394; that span reads GVGKTE.

The protein belongs to the ClpX chaperone family. HslU subfamily. As to quaternary structure, a double ring-shaped homohexamer of HslV is capped on each side by a ring-shaped HslU homohexamer. The assembly of the HslU/HslV complex is dependent on binding of ATP.

It is found in the cytoplasm. In terms of biological role, ATPase subunit of a proteasome-like degradation complex; this subunit has chaperone activity. The binding of ATP and its subsequent hydrolysis by HslU are essential for unfolding of protein substrates subsequently hydrolyzed by HslV. HslU recognizes the N-terminal part of its protein substrates and unfolds these before they are guided to HslV for hydrolysis. This Psychromonas ingrahamii (strain DSM 17664 / CCUG 51855 / 37) protein is ATP-dependent protease ATPase subunit HslU.